The chain runs to 340 residues: DNA-directed RNA polymerase subunit alpha (340 aa).

Residues 1–226 (MLIAQRPSLT…ELFGLARELN (226 aa)) are alpha N-terminal domain (alpha-NTD). Residues 243-340 (LAADLALPIE…DAGFVETEQY (98 aa)) form an alpha C-terminal domain (alpha-CTD) region.

This sequence belongs to the RNA polymerase alpha chain family. Homodimer. The RNAP catalytic core consists of 2 alpha, 1 beta, 1 beta' and 1 omega subunit. When a sigma factor is associated with the core the holoenzyme is formed, which can initiate transcription.

The enzyme catalyses RNA(n) + a ribonucleoside 5'-triphosphate = RNA(n+1) + diphosphate. In terms of biological role, DNA-dependent RNA polymerase catalyzes the transcription of DNA into RNA using the four ribonucleoside triphosphates as substrates. The chain is DNA-directed RNA polymerase subunit alpha from Streptomyces avermitilis (strain ATCC 31267 / DSM 46492 / JCM 5070 / NBRC 14893 / NCIMB 12804 / NRRL 8165 / MA-4680).